The following is a 450-amino-acid chain: Tripartite motif-containing protein 64C (450 aa).

The segment at 15–56 adopts an RING-type zinc-finger fold; that stretch reads CCICVNYFIDPVTTDCVHSFCRPCLCLCSEEGRAPMRCPLCR. The segment at 87 to 128 adopts a B box-type zinc-finger fold; it reads SSDNICVLHEETKELFCEADKRLLCGPCSESPEHMAHSHSPI. Positions 92, 95, 114, and 120 each coordinate Zn(2+). A coiled-coil region spans residues 191–218; the sequence is DEEEQRHLQALEREAKELFQQLQDSQVR. The B30.2/SPRY domain maps to 269–450; sequence ELTSWCITGV…LRPFFCFGCT (182 aa).

This sequence belongs to the TRIM/RBCC family.

This is Tripartite motif-containing protein 64C (TRIM64C) from Homo sapiens (Human).